Consider the following 289-residue polypeptide: MITYLFPGQGSQKQGMGSSLFDEFKDLTEQADETLGYSMKRLCLENPYSNLHKTQFTQPALYVVNVLSYLKKIQDNDIKPDYVAGHSLGEYNALFAAGAFDFITGLQLVRKRGELMSMATDGKMAAVMGLTAAQVSDALQTHGLHTIDIANMNSPHQVVISGRKEDIERAKSVFEGLKDVTMFHPLNVSGAFHSRYMSEAKQEFEKFLQSFHFSAISIPVISNVHARPYEQDGIHSVLADQIDHSVRWNDSIRYLLDKGRMEFEEVGPGHVLTGLIHRIKNETEASPAM.

Active-site residues include S87 and H193.

This sequence belongs to the FabD family.

The protein resides in the cytoplasm. The catalysed reaction is holo-[ACP] + malonyl-CoA = malonyl-[ACP] + CoA. Its pathway is antibiotic biosynthesis; bacillaene biosynthesis. In terms of biological role, involved in some intermediate steps for the synthesis of the antibiotic polyketide bacillaene which is involved in secondary metabolism. It catalyzes the transfer of the malonyl-CoA group to the acyl-carrier-protein AcpK (Mal-AcpK). The chain is Polyketide biosynthesis malonyl CoA-acyl carrier protein transacylase BaeC (baeC) from Bacillus velezensis (strain DSM 23117 / BGSC 10A6 / LMG 26770 / FZB42) (Bacillus amyloliquefaciens subsp. plantarum).